We begin with the raw amino-acid sequence, 255 residues long: uncharacterized protein (255 aa).

The 56-residue stretch at 4–59 (RNERLNLIRKRVDQYGQVAVKDLAIFLQVTPETVRKDLETLENDKLITRTHGGAIQ) folds into the HTH deoR-type domain. The H-T-H motif DNA-binding region spans 21–40 (VAVKDLAIFLQVTPETVRKD).

This is an uncharacterized protein from Staphylococcus epidermidis (strain ATCC 12228 / FDA PCI 1200).